We begin with the raw amino-acid sequence, 916 residues long: Protein translocase subunit SecA (916 aa).

ATP contacts are provided by residues Gln-88, 106–110 (GEGKT), and Asp-519. Cys-902, Cys-904, Cys-913, and Cys-914 together coordinate Zn(2+).

This sequence belongs to the SecA family. As to quaternary structure, monomer and homodimer. Part of the essential Sec protein translocation apparatus which comprises SecA, SecYEG and auxiliary proteins SecDF. Other proteins may also be involved. Zn(2+) serves as cofactor.

The protein localises to the cell inner membrane. It localises to the cytoplasm. The enzyme catalyses ATP + H2O + cellular proteinSide 1 = ADP + phosphate + cellular proteinSide 2.. Functionally, part of the Sec protein translocase complex. Interacts with the SecYEG preprotein conducting channel. Has a central role in coupling the hydrolysis of ATP to the transfer of proteins into and across the cell membrane, serving as an ATP-driven molecular motor driving the stepwise translocation of polypeptide chains across the membrane. This Treponema pallidum (strain Nichols) protein is Protein translocase subunit SecA.